A 273-amino-acid chain; its full sequence is Large ribosomal subunit protein uL2cz/uL2cy (273 aa).

Disordered stretches follow at residues 1-27 and 225-273; these read MAKH…SNPR and PVDH…RRRK.

The protein belongs to the universal ribosomal protein uL2 family. Part of the 50S ribosomal subunit.

The protein localises to the plastid. The protein resides in the chloroplast. The chain is Large ribosomal subunit protein uL2cz/uL2cy (rpl2-A) from Lolium perenne (Perennial ryegrass).